The following is a 366-amino-acid chain: GTPase Obg (366 aa).

Residues 1-159 form the Obg domain; that stretch reads MKFLDEAKVY…KTIWLRLKLI (159 aa). Residues 160 to 327 form the OBG-type G domain; it reads ADAGLVGLPN…VLRALRDVIV (168 aa). Residues 166 to 173, 191 to 195, 212 to 215, 279 to 282, and 308 to 310 contribute to the GTP site; these read GLPNAGKS, FTTLH, DIPG, SQID, and SAI. The Mg(2+) site is built by S173 and T193. The segment at 333 to 366 is disordered; that stretch reads DDETISQRPKKHRHKLEDRPQHENGPEESEEGEE. Residues 347-357 are compositionally biased toward basic and acidic residues; sequence KLEDRPQHENG.

It belongs to the TRAFAC class OBG-HflX-like GTPase superfamily. OBG GTPase family. As to quaternary structure, monomer. Mg(2+) serves as cofactor.

Its subcellular location is the cytoplasm. Its function is as follows. An essential GTPase which binds GTP, GDP and possibly (p)ppGpp with moderate affinity, with high nucleotide exchange rates and a fairly low GTP hydrolysis rate. Plays a role in control of the cell cycle, stress response, ribosome biogenesis and in those bacteria that undergo differentiation, in morphogenesis control. This Allorhizobium ampelinum (strain ATCC BAA-846 / DSM 112012 / S4) (Agrobacterium vitis (strain S4)) protein is GTPase Obg.